A 418-amino-acid chain; its full sequence is Serine--tRNA ligase (418 aa).

Residue 227–229 (TSE) participates in L-serine binding. ATP is bound by residues 258-260 (RRE) and Val274. Glu281 provides a ligand contact to L-serine. Position 345–348 (345–348 (ELTS)) interacts with ATP. L-serine is bound at residue Thr380.

This sequence belongs to the class-II aminoacyl-tRNA synthetase family. Type-1 seryl-tRNA synthetase subfamily. As to quaternary structure, homodimer. The tRNA molecule binds across the dimer.

The protein resides in the cytoplasm. The catalysed reaction is tRNA(Ser) + L-serine + ATP = L-seryl-tRNA(Ser) + AMP + diphosphate + H(+). The enzyme catalyses tRNA(Sec) + L-serine + ATP = L-seryl-tRNA(Sec) + AMP + diphosphate + H(+). It functions in the pathway aminoacyl-tRNA biosynthesis; selenocysteinyl-tRNA(Sec) biosynthesis; L-seryl-tRNA(Sec) from L-serine and tRNA(Sec): step 1/1. Its function is as follows. Catalyzes the attachment of serine to tRNA(Ser). Is also able to aminoacylate tRNA(Sec) with serine, to form the misacylated tRNA L-seryl-tRNA(Sec), which will be further converted into selenocysteinyl-tRNA(Sec). This chain is Serine--tRNA ligase, found in Rhodococcus opacus (strain B4).